We begin with the raw amino-acid sequence, 167 residues long: ATP synthase subunit b (167 aa).

The chain crosses the membrane as a helical span at residues 15-37 (FWQTVIFLVTLYLLSKFAWGPIM).

This sequence belongs to the ATPase B chain family. F-type ATPases have 2 components, F(1) - the catalytic core - and F(0) - the membrane proton channel. F(1) has five subunits: alpha(3), beta(3), gamma(1), delta(1), epsilon(1). F(0) has three main subunits: a(1), b(2) and c(10-14). The alpha and beta chains form an alternating ring which encloses part of the gamma chain. F(1) is attached to F(0) by a central stalk formed by the gamma and epsilon chains, while a peripheral stalk is formed by the delta and b chains.

The protein localises to the cell inner membrane. Functionally, f(1)F(0) ATP synthase produces ATP from ADP in the presence of a proton or sodium gradient. F-type ATPases consist of two structural domains, F(1) containing the extramembraneous catalytic core and F(0) containing the membrane proton channel, linked together by a central stalk and a peripheral stalk. During catalysis, ATP synthesis in the catalytic domain of F(1) is coupled via a rotary mechanism of the central stalk subunits to proton translocation. In terms of biological role, component of the F(0) channel, it forms part of the peripheral stalk, linking F(1) to F(0). This Cytophaga hutchinsonii (strain ATCC 33406 / DSM 1761 / CIP 103989 / NBRC 15051 / NCIMB 9469 / D465) protein is ATP synthase subunit b.